The sequence spans 333 residues: Mycothiol acetyltransferase (333 aa).

2 N-acetyltransferase domains span residues 18–170 and 176–333; these read PTLS…LPEP and VTVR…AAAD. Glu46 is a binding site for 1D-myo-inositol 2-(L-cysteinylamino)-2-deoxy-alpha-D-glucopyranoside. 98–100 lines the acetyl-CoA pocket; the sequence is IVV. 1D-myo-inositol 2-(L-cysteinylamino)-2-deoxy-alpha-D-glucopyranoside is bound by residues Glu203, Lys242, and Glu261. Residues 265–267 and 272–278 each bind acetyl-CoA; these read VGV and GGAGLGR. Position 299 (Tyr299) interacts with 1D-myo-inositol 2-(L-cysteinylamino)-2-deoxy-alpha-D-glucopyranoside. 304–309 lines the acetyl-CoA pocket; that stretch reads NERAVR.

Belongs to the acetyltransferase family. MshD subfamily. In terms of assembly, monomer.

The catalysed reaction is 1D-myo-inositol 2-(L-cysteinylamino)-2-deoxy-alpha-D-glucopyranoside + acetyl-CoA = mycothiol + CoA + H(+). Its function is as follows. Catalyzes the transfer of acetyl from acetyl-CoA to desacetylmycothiol (Cys-GlcN-Ins) to form mycothiol. This is Mycothiol acetyltransferase from Frankia alni (strain DSM 45986 / CECT 9034 / ACN14a).